Consider the following 194-residue polypeptide: Inosine triphosphate pyrophosphatase (194 aa).

11–16 (TGNAKK) provides a ligand contact to ITP. Residue E39 coordinates Mg(2+). Residues K51, 67-68 (DT), K84, 143-146 (FGWD), K166, and 171-172 (HR) each bind ITP.

It belongs to the HAM1 NTPase family. In terms of assembly, homodimer. Requires Mg(2+) as cofactor. The cofactor is Mn(2+).

It is found in the cytoplasm. It carries out the reaction ITP + H2O = IMP + diphosphate + H(+). The catalysed reaction is dITP + H2O = dIMP + diphosphate + H(+). The enzyme catalyses XTP + H2O = XMP + diphosphate + H(+). Pyrophosphatase that hydrolyzes non-canonical purine nucleotides such as inosine triphosphate (ITP), deoxyinosine triphosphate (dITP) or xanthosine 5'-triphosphate (XTP) to their respective monophosphate derivatives. The enzyme does not distinguish between the deoxy- and ribose forms. Probably excludes non-canonical purines from RNA and DNA precursor pools, thus preventing their incorporation into RNA and DNA and avoiding chromosomal lesions. This Dictyostelium discoideum (Social amoeba) protein is Inosine triphosphate pyrophosphatase (itpa).